We begin with the raw amino-acid sequence, 141 residues long: Flagellar assembly factor FliW 1 (141 aa).

This sequence belongs to the FliW family. Interacts with translational regulator CsrA and flagellin(s).

The protein localises to the cytoplasm. Its function is as follows. Acts as an anti-CsrA protein, binds CsrA and prevents it from repressing translation of its target genes, one of which is flagellin. Binds to flagellin and participates in the assembly of the flagellum. This chain is Flagellar assembly factor FliW 1, found in Desulfotalea psychrophila (strain LSv54 / DSM 12343).